Here is an 837-residue protein sequence, read N- to C-terminus: MSIGETIHREFIHLKLLLKKNFLVSIRSYFSTIIELLSPIVFVLIFYIIYSYGSAVDYSNVSYEQNLPNCIVSVENRCINLMFSPMNSTCTVEIMKILAKNNNMEIYNYPTDTGPLPNLENTIGFHGGIIAMDSLNSTEQFILAHPNVTLAVVDFENFPLNFTINGVKPNDSLIGFNDFYDLSFNVLLNLSTSGGFIEPVDYSIPVTTSIQKAIYDFYAINNQKQIPTINFDSTQFIEYSSVNVVSLFGGLFYYCAIMISFIFLLYKVAFEKEKNLKQGMVMMGLSRSMYWLSWVITSFTIDLIICLLLIAIGAICKLPFFLGTNFLVLLLNFFLFAISSSSMAFFMLTFIGKTKVAIGIGMAFFIVGSGLQLTFNSLGSLIFQIIYQTDSNGAAFVRVILFILPMFHFSKVLTDINDKVQSYPTSQFKISDLNDNLDGSQYGMDYLVPTTGQSLAYMFILVIVYLSLSAIIEYALSGGFSFKTVKHINVPHFDDQDVANATNRSLDPSNKSPFIIRGLSKTFNKFLRPSKSVHALKYLSLDIQEGTVLGLLGSNGAGKSTTIGILTGIHSPTSGDAIIYGHSVVKDIHSVRKITSVVPQDDILWLELTAMEHLHLFAELKGIPVRERDFQIAKVLEQVKLTKVANDQCSTFSGGMKRRLSVAIGCIGDPKIIFMDEPTTGLDPRSKRRIYTLVKEIKKDKVIILTSHDMHEIEILAQNLVILNDGIMVCNGNALQLKTKYGEGYSVQVIAKSLEVIPEIINFVTSSLPYCRFLKQSALQLNFGFPINTDPKIIVNFFKRLESITKDENNNLMRDWSISHSNMDDVFIKVSNKPKLQ.

7 consecutive transmembrane segments (helical) span residues 29-49 (YFSTIIELLSPIVFVLIFYII), 244-264 (VVSLFGGLFYYCAIMISFIFL), 303-323 (LIICLLLIAIGAICKLPFFLG), 326-346 (FLVLLLNFFLFAISSSSMAFF), 356-376 (VAIGIGMAFFIVGSGLQLTFN), 393-413 (GAAFVRVILFILPMFHFSKVL), and 455-475 (LAYMFILVIVYLSLSAIIEYA). Residues 516 to 750 (IRGLSKTFNK…YGEGYSVQVI (235 aa)) form the ABC transporter domain. ATP is bound at residue 553–560 (GSNGAGKS).

This sequence belongs to the ABC transporter superfamily. ABCA family.

The protein localises to the membrane. The chain is ABC transporter A family member 8 (abcA8) from Dictyostelium discoideum (Social amoeba).